The following is a 172-amino-acid chain: Large ribosomal subunit protein uL10 (172 aa).

This sequence belongs to the universal ribosomal protein uL10 family. Part of the ribosomal stalk of the 50S ribosomal subunit. The N-terminus interacts with L11 and the large rRNA to form the base of the stalk. The C-terminus forms an elongated spine to which L12 dimers bind in a sequential fashion forming a multimeric L10(L12)X complex.

Functionally, forms part of the ribosomal stalk, playing a central role in the interaction of the ribosome with GTP-bound translation factors. The polypeptide is Large ribosomal subunit protein uL10 (Bartonella tribocorum (strain CIP 105476 / IBS 506)).